We begin with the raw amino-acid sequence, 403 residues long: S-adenosylmethionine synthase (403 aa).

His-15 is a binding site for ATP. Asp-17 provides a ligand contact to Mg(2+). Glu-43 is a binding site for K(+). L-methionine is bound by residues Glu-56 and Gln-99. The tract at residues 99 to 109 (QSPHIAQGVDR) is flexible loop. ATP contacts are provided by residues 166-168 (DAK), 232-233 (KF), Asp-241, 247-248 (RK), Ala-264, and Lys-268. Residue Asp-241 coordinates L-methionine. Lys-272 provides a ligand contact to L-methionine.

The protein belongs to the AdoMet synthase family. As to quaternary structure, homotetramer; dimer of dimers. Requires Mg(2+) as cofactor. K(+) serves as cofactor.

It localises to the cytoplasm. It catalyses the reaction L-methionine + ATP + H2O = S-adenosyl-L-methionine + phosphate + diphosphate. The protein operates within amino-acid biosynthesis; S-adenosyl-L-methionine biosynthesis; S-adenosyl-L-methionine from L-methionine: step 1/1. Catalyzes the formation of S-adenosylmethionine (AdoMet) from methionine and ATP. The overall synthetic reaction is composed of two sequential steps, AdoMet formation and the subsequent tripolyphosphate hydrolysis which occurs prior to release of AdoMet from the enzyme. The chain is S-adenosylmethionine synthase from Stenotrophomonas maltophilia (strain K279a).